A 124-amino-acid polypeptide reads, in one-letter code: Alpha-amylase inhibitor 0.19 (124 aa).

5 cysteine pairs are disulfide-bonded: cysteine 6–cysteine 52, cysteine 20–cysteine 41, cysteine 28–cysteine 83, cysteine 42–cysteine 99, and cysteine 54–cysteine 115.

This sequence belongs to the protease inhibitor I6 (cereal trypsin/alpha-amylase inhibitor) family. Homodimer. The disulfide bonds are essential for the inhibitor activity. In terms of tissue distribution, endosperm.

It localises to the secreted. Functionally, alpha-amylase inhibitor. This Triticum aestivum (Wheat) protein is Alpha-amylase inhibitor 0.19.